Consider the following 431-residue polypeptide: Adenylosuccinate synthetase (431 aa).

Residues 13-19 and 41-43 each bind GTP; these read GDEGKGK and GHT. Aspartate 14 acts as the Proton acceptor in catalysis. Mg(2+) is bound by residues aspartate 14 and glycine 41. IMP contacts are provided by residues 14–17, 39–42, threonine 130, arginine 144, glutamine 225, threonine 240, and arginine 304; these read DEGK and NAGH. Histidine 42 acts as the Proton donor in catalysis. Substrate is bound at residue 300-306; that stretch reads ATTGRKR. GTP is bound by residues arginine 306, 332–334, and 415–417; these read KLD and STG.

The protein belongs to the adenylosuccinate synthetase family. Homodimer. Mg(2+) is required as a cofactor.

It localises to the cytoplasm. The enzyme catalyses IMP + L-aspartate + GTP = N(6)-(1,2-dicarboxyethyl)-AMP + GDP + phosphate + 2 H(+). It participates in purine metabolism; AMP biosynthesis via de novo pathway; AMP from IMP: step 1/2. Functionally, plays an important role in the de novo pathway of purine nucleotide biosynthesis. Catalyzes the first committed step in the biosynthesis of AMP from IMP. This Shewanella oneidensis (strain ATCC 700550 / JCM 31522 / CIP 106686 / LMG 19005 / NCIMB 14063 / MR-1) protein is Adenylosuccinate synthetase.